A 496-amino-acid chain; its full sequence is Beta-amylase (496 aa).

Positions 54, 94, and 102 each coordinate substrate. The active-site Proton donor is Glu-187. Substrate is bound by residues Lys-296, His-301, and Thr-343. Glu-381 serves as the catalytic Proton acceptor. Substrate-binding positions include 382–383 (NA) and Arg-421.

The protein belongs to the glycosyl hydrolase 14 family.

The enzyme catalyses Hydrolysis of (1-&gt;4)-alpha-D-glucosidic linkages in polysaccharides so as to remove successive maltose units from the non-reducing ends of the chains.. The chain is Beta-amylase (BMY1) from Vigna unguiculata (Cowpea).